Consider the following 446-residue polypeptide: Serum factor response D (446 aa).

Positions 1–61 (MGRKKIKIQR…PNAKEKYFQY (61 aa)) constitute an MADS-box domain. Disordered stretches follow at residues 95–195 (KKEK…FNSS), 210–296 (TQEN…CQQV), and 319–432 (CSSP…SNLN). A compositionally biased stretch (basic and acidic residues) spans 112-121 (SHSEEEDHKS). Residues 133–142 (HHNHHHHHHQ) are compositionally biased toward basic residues. 2 stretches are compositionally biased toward low complexity: residues 143–195 (YNNN…FNSS) and 216–282 (HYNN…NNNN). Polar residues predominate over residues 322-355 (PEDTSPMTSPRTPPFSSTNTNTLQTSPNSQQKSK). A compositionally biased stretch (low complexity) spans 365 to 432 (NNNQNNNNQN…SPTSSSSNLN (68 aa)).

It localises to the nucleus. The protein is Serum factor response D (srfD) of Dictyostelium discoideum (Social amoeba).